A 448-amino-acid chain; its full sequence is ATP-dependent protease ATPase subunit HslU (448 aa).

Residues isoleucine 18, 60–65, aspartate 261, glutamate 326, and arginine 398 contribute to the ATP site; that span reads GVGKTE.

Belongs to the ClpX chaperone family. HslU subfamily. In terms of assembly, a double ring-shaped homohexamer of HslV is capped on each side by a ring-shaped HslU homohexamer. The assembly of the HslU/HslV complex is dependent on binding of ATP.

The protein localises to the cytoplasm. Functionally, ATPase subunit of a proteasome-like degradation complex; this subunit has chaperone activity. The binding of ATP and its subsequent hydrolysis by HslU are essential for unfolding of protein substrates subsequently hydrolyzed by HslV. HslU recognizes the N-terminal part of its protein substrates and unfolds these before they are guided to HslV for hydrolysis. In Paraburkholderia xenovorans (strain LB400), this protein is ATP-dependent protease ATPase subunit HslU.